The primary structure comprises 571 residues: Cationic amino acid transporter 8 (571 aa).

An N-linked (GlcNAc...) asparagine glycan is attached at Asn-35. The next 6 helical transmembrane spans lie at 39–59 (FWLLVIIVIYTATSACIYFDW), 94–114 (SLYPITLAIHFTMSVFCGFLY), 117–137 (IGPKFTAIIGQMCNIMSWVFL), 148–168 (FLSFVFLGLGADTAFIPILTI), 177–197 (TFILTVVGAAASLSYAVPATL), and 217–237 (IFLILVPCLLVATFLLPLMPF). 3 N-linked (GlcNAc...) asparagine glycosylation sites follow: Asn-298, Asn-325, and Asn-346. A helical transmembrane segment spans residues 365-385 (LFFKVLLSYPSICIIVYFILF). The N-linked (GlcNAc...) asparagine glycan is linked to Asn-386. Transmembrane regions (helical) follow at residues 405-425 (SIINIINILMPISCIPCIIFG), 433-453 (SAIIIILMNAFSALMHLTALI), 461-481 (VSAFLYMCVTSIYTSQIYCFI), 488-508 (VVFGKLLGFASLCGGLFSLLC), and 528-548 (VVLLLVIAFILMFLPLTVLYF).

The protein belongs to the SLC43A transporter (TC 2.A.1.44) family.

It is found in the membrane. It carries out the reaction L-arginine(in) = L-arginine(out). Functionally, sodium-independent cationic amino acid transporter. Transports L-arginine, L-lysine, L-histidine and L-ornithine. This is Cationic amino acid transporter 8 from Plasmodium vivax (strain Salvador I).